The sequence spans 141 residues: Nucleoside diphosphate kinase (141 aa).

ATP-binding residues include lysine 11, phenylalanine 59, arginine 87, threonine 93, arginine 104, and asparagine 114. Histidine 117 serves as the catalytic Pros-phosphohistidine intermediate.

The protein belongs to the NDK family. In terms of assembly, homotetramer. Requires Mg(2+) as cofactor.

It localises to the cytoplasm. It catalyses the reaction a 2'-deoxyribonucleoside 5'-diphosphate + ATP = a 2'-deoxyribonucleoside 5'-triphosphate + ADP. The enzyme catalyses a ribonucleoside 5'-diphosphate + ATP = a ribonucleoside 5'-triphosphate + ADP. Its function is as follows. Major role in the synthesis of nucleoside triphosphates other than ATP. The ATP gamma phosphate is transferred to the NDP beta phosphate via a ping-pong mechanism, using a phosphorylated active-site intermediate. The polypeptide is Nucleoside diphosphate kinase (Cupriavidus necator (strain ATCC 17699 / DSM 428 / KCTC 22496 / NCIMB 10442 / H16 / Stanier 337) (Ralstonia eutropha)).